Here is a 187-residue protein sequence, read N- to C-terminus: Keratin-associated protein 5-8 (187 aa).

Tandem repeats lie at residues 28–31 (CCVP), 34–37 (CCKP), 40–43 (CCVP), 109–112 (CCKP), 119–122 (CCKP), 138–141 (CCKP), 148–151 (CCKP), 167–170 (CCKP), and 177–180 (CCVP). The interval 28-180 (CCVPICCCKP…CCSQSSCCVP (153 aa)) is 9 X 4 AA repeats of C-C-X-P.

It belongs to the KRTAP type 5 family. Restricted to hair root, not detected in any other tissues. Expressed in cuticle layers of differentiating hair follicles.

Functionally, in the hair cortex, hair keratin intermediate filaments are embedded in an interfilamentous matrix, consisting of hair keratin-associated protein (KRTAP), which are essential for the formation of a rigid and resistant hair shaft through their extensive disulfide bond cross-linking with abundant cysteine residues of hair keratins. The matrix proteins include the high-sulfur and high-glycine-tyrosine keratins. This chain is Keratin-associated protein 5-8 (KRTAP5-8), found in Homo sapiens (Human).